Reading from the N-terminus, the 395-residue chain is RNA demethylase ALKBH5 (395 aa).

Disordered stretches follow at residues 1 to 28 (MAAA…AGSR) and 47 to 83 (AAEP…EEEA). Position 2 is an N-acetylalanine (Ala-2). Lys-58 participates in a covalent cross-link: Glycyl lysine isopeptide (Lys-Gly) (interchain with G-Cter in ubiquitin). Basic and acidic residues predominate over residues 60–83 (KYQEDSDPERSDYEEHQLQKEEEA). A phosphoserine mark is found at Ser-65 and Ser-70. Residues 68–117 (ERSDYEEHQLQKEEEARKVKSGIRQIRLFSQDECSKIEARIDEVVSRAEK) are a coiled coil. Tyr-72 carries the post-translational modification Phosphotyrosine. Lys-87 participates in a covalent cross-link: Glycyl lysine isopeptide (Lys-Gly) (interchain with G-Cter in SUMO1). Phosphoserine is present on Ser-88. Lys-133 carries the post-translational modification N6-acetyllysine. Residue Tyr-140 is part of the active site. 3 residues coordinate 2-oxoglutarate: Asn-194, Tyr-196, and His-205. Cys-231 and Cys-268 form a disulfide bridge. Lys-236 is subject to N6-acetyllysine. 2-oxoglutarate is bound by residues His-267 and Arg-278. A disordered region spans residues 294–395 (ETKSLSSSTL…PTRKVKMRRH (102 aa)). Residues 296–306 (KSLSSSTLPPS) are compositionally biased toward low complexity. A Glycyl lysine isopeptide (Lys-Gly) (interchain with G-Cter in SUMO1) cross-link involves residue Lys-322. The residue at position 326 (Ser-326) is a Phosphoserine. Residue Lys-329 forms a Glycyl lysine isopeptide (Lys-Gly) (interchain with G-Cter in SUMO2) linkage. A compositionally biased stretch (basic and acidic residues) spans 329-350 (KADPDAAHRPRILEMDKEENRR). An Omega-N-methylarginine modification is found at Arg-360. Residues Ser-362, Ser-372, Ser-375, and Ser-385 each carry the phosphoserine modification.

It belongs to the alkB family. As to quaternary structure, monomer. Interacts with RBM33; promoting desumoylation by SENP1 and recruitment to N(6)-methyladenosine-containing mRNAs. Interacts (when acetylated by KAT8) with PSPC1; interaction facilitates recognition of N(6)-methyladenosine (m6A) mRNA. Fe(2+) is required as a cofactor. In terms of processing, phosphorylated at Ser-88 and Ser-326 in response to reactive oxygen species (ROS), promoting sumoylation and inactivation. Post-translationally, acetylated by KAT8 at Lys-236, promoting interaction with PSPC1, thereby facilitating recognition of N(6)-methyladenosine (m6A) mRNA by ALKBH5. Deacetylated at Lys-236 by HDAC7. Sumoylated at Lys-87 and Lys-322 by PIAS4 following phosphorylation at Ser-88 and Ser-326 in response to reactive oxygen species (ROS), inhibiting the RNA demethylase activity. Desumoylated by SENP1; relieving RNA demethylase inhibition, leading to N(6)-methyladenosine-containing mRNAs demethylation. In terms of processing, ubiquitinated at Lys-58 via 'Lys-48'-linked polyubiquitin chain, leading to its degradation by the proteasome. Deubiquitinated at Lys-58 by USP9X, promoting its stabilizazion. As to expression, widely expressed, with highest expression in testis. In testis, present in almost all testicular cell types except elongating and elongated spermatids (at protein level). Among spermatogenic cells, present at high level in spermatocytes; medium levels in spermatogonia and lower levels in round spermatids (at protein level).

Its subcellular location is the nucleus speckle. It carries out the reaction an N(6)-methyladenosine in mRNA + 2-oxoglutarate + O2 = an adenosine in mRNA + formaldehyde + succinate + CO2. RNA demethylase activity is inhibited following sumoylation. Inhibition is relieved following desumoylation. Inhibited by histone demethylase inhibitor IOX1. Functionally, dioxygenase that specifically demethylates N(6)-methyladenosine (m6A) RNA, the most prevalent internal modification of messenger RNA (mRNA) in higher eukaryotes. Demethylates RNA by oxidative demethylation, which requires molecular oxygen, alpha-ketoglutarate and iron. Demethylation of m6A mRNA affects mRNA processing, translation and export. Can also demethylate N(6)-methyladenosine in single-stranded DNA (in vitro). Required for the late meiotic and haploid phases of spermatogenesis by mediating m6A demethylation in spermatocytes and round spermatids: m6A demethylation of target transcripts is required for correct splicing and the production of longer 3'-UTR mRNAs in male germ cells. Involved in paraspeckle assembly, a nuclear membraneless organelle, by undergoing liquid-liquid phase separation. Paraspeckle assembly is coupled with m6A demethylation of RNAs, such as NEAT1 non-coding RNA. Also acts as a negative regulator of T-cell development: inhibits gamma-delta T-cell proliferation via demethylation of JAG1 and NOTCH2 transcripts. Inhibits regulatory T-cell (Treg) recruitment by mediating demethylation and destabilization of CCL28 mRNAs. The polypeptide is RNA demethylase ALKBH5 (Mus musculus (Mouse)).